The following is a 458-amino-acid chain: Ribulose bisphosphate carboxylase (458 aa).

Asparagine 111 lines the substrate pocket. Lysine 166 (proton acceptor) is an active-site residue. Lysine 168 serves as a coordination point for substrate. Mg(2+)-binding residues include lysine 191, aspartate 193, and glutamate 194. An N6-carboxylysine modification is found at lysine 191. Catalysis depends on histidine 287, which acts as the Proton acceptor. Residues arginine 288, histidine 321, and serine 368 each contribute to the substrate site.

This sequence belongs to the RuBisCO large chain family. Type II subfamily. In terms of assembly, homodimer. The cofactor is Mg(2+).

It carries out the reaction 2 (2R)-3-phosphoglycerate + 2 H(+) = D-ribulose 1,5-bisphosphate + CO2 + H2O. It catalyses the reaction D-ribulose 1,5-bisphosphate + O2 = 2-phosphoglycolate + (2R)-3-phosphoglycerate + 2 H(+). RuBisCO catalyzes two reactions: the carboxylation of D-ribulose 1,5-bisphosphate, the primary event in carbon dioxide fixation, as well as the oxidative fragmentation of the pentose substrate. Both reactions occur simultaneously and in competition at the same active site. This is Ribulose bisphosphate carboxylase (cbbM) from Rhodobacter capsulatus (strain ATCC BAA-309 / NBRC 16581 / SB1003).